The sequence spans 481 residues: MSYIKKLRARLDSGEISAVELTKEYLAKIKEQDKRINSVITLCEAEALKEAEDADAIISAGKQGLLTGIPILHKDLFCTKGIRTTAASKMLDNFVAPYDSTVTKNCKDQGMVTLGKLNMDEFAMGSTNEYSYYGAVSNPWDLERVPGGSSGGSAAAVAAGFAPISTGSDTGGSVRQPASFCGLTAMKPSYGSTSRFGMVAFASSFDQAGIFGHYAEDVALMLDAIAGECEFDSTCVGVKQNHFTQDLEKDISGKVIGVDESLIKDLPAQIQEAVSKTLDNFKKLGAEIKSVKVPDLKEALSTYYIITPAEAAANLARYDGIRYGYRNPEARDLDELYRKSRTDGFGAEVKRRIMIGNYVLASSQYDSYYNKSQQLRKVMTDQINQIFTQVDAIFMPASPSEAFKKGDKLDPVSAYLSDIYTIPANISGLPAIAFPIGFANNLPVGGQLMAKAFNDNILTQMVVQYQKHYGIEEFILQQARI.

Residues Lys74 and Ser149 each act as charge relay system in the active site. Ser173 acts as the Acyl-ester intermediate in catalysis.

This sequence belongs to the amidase family. GatA subfamily. In terms of assembly, heterotrimer of A, B and C subunits.

The enzyme catalyses L-glutamyl-tRNA(Gln) + L-glutamine + ATP + H2O = L-glutaminyl-tRNA(Gln) + L-glutamate + ADP + phosphate + H(+). Allows the formation of correctly charged Gln-tRNA(Gln) through the transamidation of misacylated Glu-tRNA(Gln) in organisms which lack glutaminyl-tRNA synthetase. The reaction takes place in the presence of glutamine and ATP through an activated gamma-phospho-Glu-tRNA(Gln). In Francisella tularensis subsp. mediasiatica (strain FSC147), this protein is Glutamyl-tRNA(Gln) amidotransferase subunit A.